The chain runs to 331 residues: MRRGLLLLNLGTPDNADIRAVKLYLREFLTDKRVIDLPTIPRYILVYCLILPFRSPKSAQAYQSIWTEKGSPLLYHSQNLVTKLQSALKDEYKIALGMRYGTPSITTALAELKDCHSLTILPLFPQYSSAATGSAIEKTLSYLANQEIIPSIKIIRDFYQRPEYIQAQAKIMKPYIKDNFHVLFSYHGIPERHIHKSGCDTLCPQTCTPIYDKNQACYRAQCYQTSLLLAKELQLGTHQYTTAFQSRLGKTPWIKPYTDEIFAELISKGIKNIVVSCPSFVADCLETLEEIGIRAKEQWEKLGGEQFILTPCMNDHPEWIKAIQSIVNEQF.

2 residues coordinate Fe cation: histidine 187 and glutamate 286.

This sequence belongs to the ferrochelatase family.

The protein localises to the cytoplasm. The catalysed reaction is heme b + 2 H(+) = protoporphyrin IX + Fe(2+). It functions in the pathway porphyrin-containing compound metabolism; protoheme biosynthesis; protoheme from protoporphyrin-IX: step 1/1. In terms of biological role, catalyzes the ferrous insertion into protoporphyrin IX. This chain is Ferrochelatase, found in Legionella pneumophila (strain Lens).